The chain runs to 456 residues: Bifunctional protein GlmU (456 aa).

The segment at 1 to 229 (MLNSAMSVVI…ISETDGVNNR (229 aa)) is pyrophosphorylase. Residues 11-14 (LAAG), K25, Q76, 81-82 (GT), 103-105 (YGD), G140, E154, N169, and N227 contribute to the UDP-N-acetyl-alpha-D-glucosamine site. D105 provides a ligand contact to Mg(2+). Residue N227 coordinates Mg(2+). Positions 230-250 (LQLSRLERIYQAEQAEKLLLS) are linker. An N-acetyltransferase region spans residues 251 to 456 (GVMLRDPARF…QGWQRPVKKK (206 aa)). R333 and K351 together coordinate UDP-N-acetyl-alpha-D-glucosamine. H363 serves as the catalytic Proton acceptor. Residues Y366 and N377 each contribute to the UDP-N-acetyl-alpha-D-glucosamine site. Residues A380, 386–387 (NY), S405, A423, and R440 each bind acetyl-CoA.

This sequence in the N-terminal section; belongs to the N-acetylglucosamine-1-phosphate uridyltransferase family. It in the C-terminal section; belongs to the transferase hexapeptide repeat family. In terms of assembly, homotrimer. It depends on Mg(2+) as a cofactor.

The protein resides in the cytoplasm. It carries out the reaction alpha-D-glucosamine 1-phosphate + acetyl-CoA = N-acetyl-alpha-D-glucosamine 1-phosphate + CoA + H(+). The enzyme catalyses N-acetyl-alpha-D-glucosamine 1-phosphate + UTP + H(+) = UDP-N-acetyl-alpha-D-glucosamine + diphosphate. It participates in nucleotide-sugar biosynthesis; UDP-N-acetyl-alpha-D-glucosamine biosynthesis; N-acetyl-alpha-D-glucosamine 1-phosphate from alpha-D-glucosamine 6-phosphate (route II): step 2/2. It functions in the pathway nucleotide-sugar biosynthesis; UDP-N-acetyl-alpha-D-glucosamine biosynthesis; UDP-N-acetyl-alpha-D-glucosamine from N-acetyl-alpha-D-glucosamine 1-phosphate: step 1/1. The protein operates within bacterial outer membrane biogenesis; LPS lipid A biosynthesis. In terms of biological role, catalyzes the last two sequential reactions in the de novo biosynthetic pathway for UDP-N-acetylglucosamine (UDP-GlcNAc). The C-terminal domain catalyzes the transfer of acetyl group from acetyl coenzyme A to glucosamine-1-phosphate (GlcN-1-P) to produce N-acetylglucosamine-1-phosphate (GlcNAc-1-P), which is converted into UDP-GlcNAc by the transfer of uridine 5-monophosphate (from uridine 5-triphosphate), a reaction catalyzed by the N-terminal domain. The sequence is that of Bifunctional protein GlmU from Salmonella heidelberg (strain SL476).